The following is a 504-amino-acid chain: ATP synthase subunit alpha, chloroplastic (504 aa).

Position 169 to 176 (169 to 176) interacts with ATP; sequence GDRQTGKT.

The protein belongs to the ATPase alpha/beta chains family. F-type ATPases have 2 components, CF(1) - the catalytic core - and CF(0) - the membrane proton channel. CF(1) has five subunits: alpha(3), beta(3), gamma(1), delta(1), epsilon(1). CF(0) has four main subunits: a, b, b' and c.

The protein localises to the plastid. It is found in the chloroplast thylakoid membrane. It catalyses the reaction ATP + H2O + 4 H(+)(in) = ADP + phosphate + 5 H(+)(out). In terms of biological role, produces ATP from ADP in the presence of a proton gradient across the membrane. The alpha chain is a regulatory subunit. This chain is ATP synthase subunit alpha, chloroplastic, found in Stigeoclonium helveticum (Green alga).